Reading from the N-terminus, the 458-residue chain is Sensor histidine kinase ZraS (458 aa).

Topologically, residues 1 to 14 (MRFMQRSKDSLAKW) are cytoplasmic. A helical transmembrane segment spans residues 15 to 35 (LSAILPVVIVGLVGLFAVTVI). Residues 36–194 (RDYGRETAAA…SAEDREQRNT (159 aa)) lie on the Periplasmic side of the membrane. The chain crosses the membrane as a helical span at residues 195–215 (LIILFALATVLLASVLSFFWY). Over 216–458 (RRYLRSRQLL…VNITRKDPQG (243 aa)) the chain is Cytoplasmic. The Histidine kinase domain occupies 244 to 451 (GVAHEIRNPL…RFTLWLPVNI (208 aa)). His247 carries the post-translational modification Phosphohistidine; by autocatalysis.

In terms of processing, autophosphorylated.

It localises to the cell inner membrane. It carries out the reaction ATP + protein L-histidine = ADP + protein N-phospho-L-histidine.. With respect to regulation, activity of the ZraS/ZraR two-component system is repressed by the zinc-bound form of ZraP, which probably interacts with the periplasmic region of ZraS. Its function is as follows. Part of the Zra signaling pathway, an envelope stress response (ESR) system composed of the periplasmic accessory protein ZraP, the histidine kinase ZraS and the transcriptional regulator ZraR. The ZraPSR system contributes to antibiotic resistance and is important for membrane integrity in the presence of membrane-targeting biocides. ZraS is a member of the two-component regulatory system ZraS/ZraR. Functions as a membrane-associated sensor kinase that phosphorylates ZraR in response to high concentrations of Zn(2+) or Pb(2+) in the medium. The protein is Sensor histidine kinase ZraS (zraS) of Escherichia coli O157:H7.